We begin with the raw amino-acid sequence, 264 residues long: Ribonuclease HII (264 aa).

Residues 33 to 224 (GPVAGVDEVG…VRRVASGSNT (192 aa)) form the RNase H type-2 domain. A divalent metal cation contacts are provided by aspartate 39, glutamate 40, and aspartate 133. Residues 222-264 (SNTAEVADGQPDPRDGTAQTGEGRWSKSSHPATMRATGRAQGT) form a disordered region.

It belongs to the RNase HII family. It depends on Mn(2+) as a cofactor. The cofactor is Mg(2+).

Its subcellular location is the cytoplasm. It catalyses the reaction Endonucleolytic cleavage to 5'-phosphomonoester.. Endonuclease that specifically degrades the RNA of RNA-DNA hybrids. In Mycobacterium bovis (strain ATCC BAA-935 / AF2122/97), this protein is Ribonuclease HII.